Reading from the N-terminus, the 131-residue chain is UPF0212 protein TK1194 (131 aa).

The protein belongs to the UPF0212 family.

The chain is UPF0212 protein TK1194 from Thermococcus kodakarensis (strain ATCC BAA-918 / JCM 12380 / KOD1) (Pyrococcus kodakaraensis (strain KOD1)).